Consider the following 232-residue polypeptide: Large ribosomal subunit protein uL1 (232 aa).

This sequence belongs to the universal ribosomal protein uL1 family. Part of the 50S ribosomal subunit.

Binds directly to 23S rRNA. The L1 stalk is quite mobile in the ribosome, and is involved in E site tRNA release. Functionally, protein L1 is also a translational repressor protein, it controls the translation of the L11 operon by binding to its mRNA. This chain is Large ribosomal subunit protein uL1, found in Rhizobium meliloti (strain 1021) (Ensifer meliloti).